The primary structure comprises 192 residues: Probable thymidylate kinase (192 aa).

8-15 (GIDGSGKS) contributes to the ATP binding site.

This sequence belongs to the thymidylate kinase family.

The catalysed reaction is dTMP + ATP = dTDP + ADP. This is Probable thymidylate kinase from Pyrobaculum aerophilum (strain ATCC 51768 / DSM 7523 / JCM 9630 / CIP 104966 / NBRC 100827 / IM2).